A 105-amino-acid chain; its full sequence is DNA-directed RNA polymerase subunit Rpo13 (105 aa).

Composition is skewed to basic and acidic residues over residues 1–10 (MSEDDSKKEP) and 70–80 (FDDVARSYSKA). Disordered stretches follow at residues 1–35 (MSED…GGEF) and 70–105 (FDDV…EEEE). Positions 81 to 97 (DKKKRRVEKKPKKGKVT) are enriched in basic residues.

This sequence belongs to the archaeal Rpo13 RNA polymerase subunit family. As to quaternary structure, part of the 13-subunit RNA polymerase.

Its subcellular location is the cytoplasm. It catalyses the reaction RNA(n) + a ribonucleoside 5'-triphosphate = RNA(n+1) + diphosphate. Functionally, DNA-dependent RNA polymerase catalyzes the transcription of DNA into RNA using the four ribonucleoside triphosphates as substrates. In vitro binds dsDNA but not ssDNA. The chain is DNA-directed RNA polymerase subunit Rpo13 from Sulfolobus acidocaldarius (strain ATCC 33909 / DSM 639 / JCM 8929 / NBRC 15157 / NCIMB 11770).